The primary structure comprises 161 residues: Phenolic acid decarboxylase PadC (161 aa).

Positions 11 and 13 each coordinate substrate. Tyrosine 19 (proton donor) is an active-site residue. Residue arginine 41 participates in substrate binding. Catalysis depends on glutamate 64, which acts as the Proton acceptor.

It belongs to the PadC family. As to quaternary structure, homodimer.

The catalysed reaction is (E)-4-coumarate + H(+) = 4-vinylphenol + CO2. It catalyses the reaction (E)-cinnamate + H(+) = styrene + CO2. It carries out the reaction (E)-ferulate + H(+) = 2-methoxy-4-vinylphenol + CO2. Functionally, involved in the decarboxylation and detoxification of phenolic derivatives. It is able to catalyze the decarboxylation of ferulic, p-coumaric and caffeic acids. The polypeptide is Phenolic acid decarboxylase PadC (padC) (Bacillus subtilis (strain 168)).